The following is a 349-amino-acid chain: MRIALLAGDGIGPEITAEAVKILKAVVGQEIEFDEALIGGAAWKVTGSPLPEETLKLCKNSDAILFGSVGDPECDHLERALRPEQAILGLRKELDLFANLRPARLFPELQAESPLKENIVTGTDLMIVRELTGDVYFGTPRGQRKDDQNRREGFDTMRYNEDEVKRIARIGFETARSRSGNLCSIDKSNVLETSQLWRTVVLEIAQEYPDVELSHMYVDNAAMQLVRAPDQFDVIVTGNLFGDILSDLASACVGSIGLLPSASLNSEGKGLYEPIHGSAPDIAGLGKANPLATILSGAMMLRYSLKREADADRIEKAVSTALEKGARTADLGGKMTTSEMGNAVLAALN.

4 residues coordinate substrate: Arg-91, Arg-101, Arg-129, and Asp-219. 3 residues coordinate Mg(2+): Asp-219, Asp-243, and Asp-247. Position 277-289 (277-289 (GSAPDIAGLGKAN)) interacts with NAD(+).

Belongs to the isocitrate and isopropylmalate dehydrogenases family. LeuB type 1 subfamily. As to quaternary structure, homodimer. The cofactor is Mg(2+). Mn(2+) is required as a cofactor.

It is found in the cytoplasm. It catalyses the reaction (2R,3S)-3-isopropylmalate + NAD(+) = 4-methyl-2-oxopentanoate + CO2 + NADH. It participates in amino-acid biosynthesis; L-leucine biosynthesis; L-leucine from 3-methyl-2-oxobutanoate: step 3/4. Its function is as follows. Catalyzes the oxidation of 3-carboxy-2-hydroxy-4-methylpentanoate (3-isopropylmalate) to 3-carboxy-4-methyl-2-oxopentanoate. The product decarboxylates to 4-methyl-2 oxopentanoate. This Zymomonas mobilis subsp. mobilis (strain ATCC 31821 / ZM4 / CP4) protein is 3-isopropylmalate dehydrogenase.